The sequence spans 359 residues: 3-dehydroquinate synthase (359 aa).

NAD(+) is bound by residues Asp-71 to Lys-76, Gly-105 to Asp-109, Thr-129 to Thr-130, Lys-142, and Lys-151. Zn(2+) is bound by residues Glu-184, His-247, and His-264.

The protein belongs to the sugar phosphate cyclases superfamily. Dehydroquinate synthase family. It depends on Co(2+) as a cofactor. Zn(2+) is required as a cofactor. NAD(+) serves as cofactor.

Its subcellular location is the cytoplasm. The enzyme catalyses 7-phospho-2-dehydro-3-deoxy-D-arabino-heptonate = 3-dehydroquinate + phosphate. Its pathway is metabolic intermediate biosynthesis; chorismate biosynthesis; chorismate from D-erythrose 4-phosphate and phosphoenolpyruvate: step 2/7. Its function is as follows. Catalyzes the conversion of 3-deoxy-D-arabino-heptulosonate 7-phosphate (DAHP) to dehydroquinate (DHQ). The protein is 3-dehydroquinate synthase of Burkholderia cenocepacia (strain ATCC BAA-245 / DSM 16553 / LMG 16656 / NCTC 13227 / J2315 / CF5610) (Burkholderia cepacia (strain J2315)).